The primary structure comprises 73 residues: Disintegrin lachesin (73 aa).

The Disintegrin domain occupies Glu1 to Gly73. Cystine bridges form between Cys6-Cys21, Cys8-Cys16, Cys15-Cys38, Cys29-Cys35, Cys34-Cys59, and Cys47-Cys66. The short motif at Arg51 to Asp53 is the Cell attachment site element. The segment at Arg51–Gly73 is disordered.

This sequence belongs to the venom metalloproteinase (M12B) family. P-II subfamily. P-IIa sub-subfamily. As to quaternary structure, monomer (disintegrin). As to expression, expressed by the venom gland.

It localises to the secreted. Inhibits fibrinogen interaction with platelets. Acts by binding to alpha-IIb/beta-3 (ITGA2B/ITGB3) on the platelet surface and inhibits aggregation induced by ADP, thrombin, platelet-activating factor and collagen. The protein is Disintegrin lachesin of Lachesis muta muta (Bushmaster).